Consider the following 424-residue polypeptide: Adenylyltransferase and sulfurtransferase UBA4 (424 aa).

ATP-binding positions include Gly76, Asp97, 104–108 (TNLHR), Lys121, and 165–166 (DS). Zn(2+)-binding residues include Cys206 and Cys209. Cys223 functions as the Glycyl thioester intermediate; for adenylyltransferase activity in the catalytic mechanism. Zn(2+) is bound at residue Cys283. Residues 326–422 (RNSDHVLLDV…WYSEVDQNIP (97 aa)) enclose the Rhodanese domain. The active-site Cysteine persulfide intermediate; for sulfurtransferase activity is Cys382.

The protein in the N-terminal section; belongs to the HesA/MoeB/ThiF family. UBA4 subfamily. Zn(2+) serves as cofactor.

It localises to the cytoplasm. It is found in the cytosol. The protein operates within tRNA modification; 5-methoxycarbonylmethyl-2-thiouridine-tRNA biosynthesis. In terms of biological role, plays a central role in 2-thiolation of mcm(5)S(2)U at tRNA wobble positions of cytosolic tRNA(Lys), tRNA(Glu) and tRNA(Gln). Acts by mediating the C-terminal thiocarboxylation of sulfur carrier URM1. Its N-terminus first activates URM1 as acyl-adenylate (-COAMP), then the persulfide sulfur on the catalytic cysteine is transferred to URM1 to form thiocarboxylation (-COSH) of its C-terminus. The reaction probably involves hydrogen sulfide that is generated from the persulfide intermediate and that acts as a nucleophile towards URM1. Subsequently, a transient disulfide bond is formed. Does not use thiosulfate as sulfur donor; NFS1 probably acting as a sulfur donor for thiocarboxylation reactions. Prior mcm(5) tRNA modification by the elongator complex is required for 2-thiolation. May also be involved in protein urmylation. In Meyerozyma guilliermondii (strain ATCC 6260 / CBS 566 / DSM 6381 / JCM 1539 / NBRC 10279 / NRRL Y-324) (Yeast), this protein is Adenylyltransferase and sulfurtransferase UBA4.